The following is a 468-amino-acid chain: ATP synthase subunit beta (468 aa).

153–160 (GGAGVGKT) provides a ligand contact to ATP.

Belongs to the ATPase alpha/beta chains family. In terms of assembly, F-type ATPases have 2 components, CF(1) - the catalytic core - and CF(0) - the membrane proton channel. CF(1) has five subunits: alpha(3), beta(3), gamma(1), delta(1), epsilon(1). CF(0) has three main subunits: a(1), b(2) and c(9-12). The alpha and beta chains form an alternating ring which encloses part of the gamma chain. CF(1) is attached to CF(0) by a central stalk formed by the gamma and epsilon chains, while a peripheral stalk is formed by the delta and b chains.

Its subcellular location is the cell inner membrane. The catalysed reaction is ATP + H2O + 4 H(+)(in) = ADP + phosphate + 5 H(+)(out). In terms of biological role, produces ATP from ADP in the presence of a proton gradient across the membrane. The catalytic sites are hosted primarily by the beta subunits. The polypeptide is ATP synthase subunit beta (Nautilia profundicola (strain ATCC BAA-1463 / DSM 18972 / AmH)).